Consider the following 2293-residue polypeptide: G-protein coupled receptor 179 (2293 aa).

The N-terminal stretch at 1–27 is a signal peptide; the sequence is MGARAVVISSLAWGLLSCCFLCSGALG. The tract at residues 62-245 is cache-like region; sequence FLYSGDVQRL…CHEGQLRPGW (184 aa). A glycan (N-linked (GlcNAc...) asparagine) is linked at N75. An intrachain disulfide couples C76 to C236. The N-linked (GlcNAc...) asparagine glycan is linked to N298. The next 7 membrane-spanning stretches (helical) occupy residues 383-403, 416-436, 445-465, 494-514, 544-564, 585-602, and 608-628; these read AVLA…LVAY, IVLL…VFIL, CVAL…TIIL, LGQL…GALE, YIMV…CYAT, LLLS…VPSL, and LLLF…LIFI. Cysteines 445 and 537 form a disulfide. N661 carries N-linked (GlcNAc...) asparagine glycosylation. Residues 733–812 form a disordered region; that stretch reads QHSRDSGSLG…GRESLADGPP (80 aa). Residues 738-759 show a composition bias toward low complexity; the sequence is SGSLGLGSLPGSSRRRLLSSSL. A compositionally biased stretch (basic and acidic residues) spans 773 to 782; that stretch reads STYDHHREHN. N-linked (GlcNAc...) asparagine glycosylation is present at N823. 11 disordered regions span residues 872-935, 1046-1235, 1275-1294, 1326-1345, 1388-1411, 1479-1560, 1578-1770, 1792-1828, 1844-1882, 1924-2051, and 2212-2293; these read EERK…HPPI, GTGE…NPAL, ERTE…LSRS, EAVC…QLVH, GTST…ATFW, ELAG…HGGS, ATLS…VCPW, TVGK…TSKG, WKPP…KGEL, SSSH…GSEK, and FLPE…WDCE. Positions 1080–1089 are enriched in polar residues; sequence LKTPLQQGSV. 3 stretches are compositionally biased toward basic and acidic residues: residues 1105 to 1123, 1173 to 1186, and 1275 to 1286; these read TYKE…KGKP, CQKE…DRNK, and ERTEGGSLEKKP. Basic and acidic residues-rich tracts occupy residues 1546–1555 and 1597–1632; these read ASSKAGEKLL and RTSE…RIQK. Positions 1644–1663 are enriched in polar residues; the sequence is PGSTPQRDTEKAQASLQRQG. Composition is skewed to basic and acidic residues over residues 1682 to 1698 and 1717 to 1728; these read GEER…RPND and KKSERLGSEKEV. Residues 1737 to 1747 show a composition bias toward polar residues; sequence PGDSSQQPDTP. Composition is skewed to basic and acidic residues over residues 1748–1761, 1796–1813, and 1872–1882; these read NTEK…EHGS, GLER…RQNL, and ASDRASEKGEL. Positions 1937-1948 are enriched in polar residues; the sequence is RVSSQPLVSTGD. The segment covering 1979-2007 has biased composition (basic and acidic residues); that stretch reads TETEMSRQDEKEKSQEEKERAPETRDHEG. The span at 2283 to 2293 shows a compositional bias: pro residues; that stretch reads SPPPDYPWDCE.

The protein belongs to the G-protein coupled receptor 3 family. Homodimer. Associates with the R7 group RGS-GNB5 complexes, composed of an R7 group RGS subunit (RGS6, RGS7, RGS9 or RGS11) and GNB5, promoting their localization to the cell membrane and regulating the GTPase activator activity of R7 RGS proteins. Interacts with TRPM1. Interacts with GRM6. Interacts with EGFLAM; transsynaptic interaction is required for synaptic organization of photoreceptor cells.

The protein localises to the cell membrane. The protein resides in the postsynaptic cell membrane. It localises to the cell projection. Its subcellular location is the dendrite. In terms of biological role, orphan receptor involved in vision. Required for signal transduction through retinal depolarizing bipolar cells. Acts as an atypical G-protein coupled receptor that recruits and regulates the R7 group RGS-GNB5 complexes instead of activating G proteins: promotes the GTPase activator activity of R7 RGS proteins, increasing the GTPase activity of G protein alpha subunits, thereby driving them into their inactive GDP-bound form. Associates with components of metabotropic signaling cascade in retina ON-bipolar neurons, such as TRPM1 and GRM6: may control the ability of the GRM6 cascade to gate TRPM1. This is G-protein coupled receptor 179 from Mus musculus (Mouse).